The following is a 104-amino-acid chain: Naphthalene 1,2-dioxygenase system, ferredoxin component (104 aa).

The 96-residue stretch at 6 to 101 (IDAVALYEIP…VKIEGQRVMI (96 aa)) folds into the Rieske domain. Positions 45, 47, 64, and 67 each coordinate [2Fe-2S] cluster.

The protein belongs to the bacterial ring-hydroxylating dioxygenase ferredoxin component family. In terms of assembly, the naphthalene dioxygenase (NDO) multicomponent enzyme system is composed of an electron transfer component and a dioxygenase component (iron sulfur protein (ISP)). The electron transfer component is composed of a ferredoxin reductase (NdoR) and a ferredoxin (NdoA), and the dioxygenase component is formed of a heterohexamer (trimer of heterodimers) of three large alpha subunits (NdoB) and three small beta subunits (NdoC). The cofactor is [2Fe-2S] cluster.

The protein operates within aromatic compound metabolism; naphthalene degradation. Functionally, component of the naphthalene dioxygenase (NDO) multicomponent enzyme system which catalyzes the incorporation of both atoms of molecular oxygen into naphthalene to form cis-(1R,2S)-dihydroxy-1,2-dihydronaphthalene. Functions as an intermediate electron transfer protein via a specific interaction with iron sulfur protein components (ISP) (NdoB and NdoC). The protein is Naphthalene 1,2-dioxygenase system, ferredoxin component of Pseudomonas aeruginosa.